Consider the following 899-residue polypeptide: Probable disease resistance protein RXW24L (899 aa).

The stretch at 13–50 forms a coiled coil; the sequence is DRLSQEYDQFKGVEDQVTELKSNLNLLKSFLKDADAKK. The NB-ARC domain occupies 143–455; that stretch reads LQERQREMRH…AEGISERRRY (313 aa). Position 189-196 (189-196) interacts with ATP; sequence GMGGLGKT.

It belongs to the disease resistance NB-LRR family.

In terms of biological role, potential disease resistance protein. This chain is Probable disease resistance protein RXW24L (RXW24L), found in Arabidopsis thaliana (Mouse-ear cress).